A 165-amino-acid polypeptide reads, in one-letter code: Phosphopantetheine adenylyltransferase (165 aa).

Threonine 9 is a substrate binding site. Residues 9-10 (TF) and histidine 17 contribute to the ATP site. Substrate contacts are provided by lysine 41, leucine 78, and arginine 92. Residues 93-95 (GLR), glutamate 103, and 128-134 (HQAIASK) contribute to the ATP site.

The protein belongs to the bacterial CoaD family. As to quaternary structure, homohexamer. Requires Mg(2+) as cofactor.

The protein localises to the cytoplasm. The catalysed reaction is (R)-4'-phosphopantetheine + ATP + H(+) = 3'-dephospho-CoA + diphosphate. It participates in cofactor biosynthesis; coenzyme A biosynthesis; CoA from (R)-pantothenate: step 4/5. Functionally, reversibly transfers an adenylyl group from ATP to 4'-phosphopantetheine, yielding dephospho-CoA (dPCoA) and pyrophosphate. This chain is Phosphopantetheine adenylyltransferase, found in Ruegeria sp. (strain TM1040) (Silicibacter sp.).